The following is a 720-amino-acid chain: MNNHVSSTPSTMKLKQTIHPILLYFIHFIISLYTILTYIPFYFLCESKQEKPNHIKAKPVSSKPDSAYRSVNSMDGLASVLYPGCDTLDKVFMYAKNKFKDKRLLGTREILNEEDEIQPNGKVFKKVILGHYNWLSYEDVFIRALDFGNGLQMLGQKPKANIAIFCETRAEWMIAAQACFMYNFQLVTLYATLGGPAIVHGLNETEVTNIITSKELLQTKLKDIVSLVPRLRHIITVDGKPPTWSEFPKGVIVHTMAAVQALGVKADVDKKAHSKPLPSDIAVIMYTSGSTGIPKGVMISHSNIIASITGMARRIPRLGEEDVYIGYLPLAHVLELSAELVCLSHGCRIGYSSPQTLADQSSKIKKGSKGDTSVLKPTLMAAVPEIMDRIYKNVMNKVNEMSAFQRNLFILAYNYKMEQISKGCSTPLCDRFVFRNVRRLLGGNIRVLLCGGAPLSATTQRFMNICFCCPVGQGYGLTESTGAGTITEVWDYNTGRVGAPLVCCEIKLKNWEEGGYFNTDKPHPRGEILIGGQNVTMGYYKNEAKTKADFFEDENGQRWLCTGDIGEFDPDGCLKIIDRKKDLVKLQAGEYVSLGKVEAALKNLPLIDNICAYANSYHSYVIGFVVPNQKELTELARTKGFNGTWEELCNSSEMENEVLKVLSEAAISASLEKFEIPLKIRLSPDPWTPETGLVTDAFKLKRKELKTHYQADIERMYGRK.

A helical; Signal-anchor for type III membrane protein membrane pass occupies residues 21–41 (ILLYFIHFIISLYTILTYIPF). The Cytoplasmic portion of the chain corresponds to 42–720 (YFLCESKQEK…ADIERMYGRK (679 aa)). Phosphoserine is present on serine 683.

Belongs to the ATP-dependent AMP-binding enzyme family. Mg(2+) serves as cofactor. As to expression, predominantly expressed in the brain, and to a much lesser extent, in lung, adrenal gland, kidney, small intestine, and adipose tissue but not detected in heart or liver.

It is found in the mitochondrion outer membrane. The protein resides in the peroxisome membrane. It localises to the microsome membrane. The protein localises to the endoplasmic reticulum membrane. The enzyme catalyses a long-chain fatty acid + ATP + CoA = a long-chain fatty acyl-CoA + AMP + diphosphate. The catalysed reaction is (5Z,8Z,11Z,14Z)-eicosatetraenoate + ATP + CoA = (5Z,8Z,11Z,14Z)-eicosatetraenoyl-CoA + AMP + diphosphate. It catalyses the reaction a medium-chain fatty acid + ATP + CoA = a medium-chain fatty acyl-CoA + AMP + diphosphate. It carries out the reaction 15-hydroxy-(5Z,8Z,11Z,13E)-eicosatetraenoate + ATP + CoA = 15-hydroxy-(5Z,8Z,11Z,13E)-eicosatetraenoyl-CoA + AMP + diphosphate. The enzyme catalyses 12-hydroxy-(5Z,8Z,10E,14Z)-eicosatetraenoate + ATP + CoA = 12-hydroxy-(5Z,8Z,10E,14Z)-eicosatetraenoyl-CoA + AMP + diphosphate. The catalysed reaction is 5-hydroxy-(6E,8Z,11Z,14Z)-eicosatetraenoate + ATP + CoA = 5-hydroxy-(6E,8Z,11Z,14Z)-eicosatetraenoyl-CoA + AMP + diphosphate. It catalyses the reaction 14,15-epoxy-(5Z,8Z,11Z)-eicosatrienoate + ATP + CoA = 14,15-epoxy-(5Z,8Z,11Z)-eicosatrienoyl-CoA + AMP + diphosphate. It carries out the reaction 11,12-epoxy-(5Z,8Z,14Z)-eicosatrienoate + ATP + CoA = 11,12-epoxy-(5Z,8Z,14Z)-eicosatrienoyl-CoA + AMP + diphosphate. The enzyme catalyses (E)-hexadec-2-enoate + ATP + CoA = (2E)-hexadecenoyl-CoA + AMP + diphosphate. The catalysed reaction is hexadecanoate + ATP + CoA = hexadecanoyl-CoA + AMP + diphosphate. It catalyses the reaction tetradecanoate + ATP + CoA = tetradecanoyl-CoA + AMP + diphosphate. It carries out the reaction dodecanoate + ATP + CoA = dodecanoyl-CoA + AMP + diphosphate. The enzyme catalyses octadecanoate + ATP + CoA = octadecanoyl-CoA + AMP + diphosphate. The catalysed reaction is eicosanoate + ATP + CoA = eicosanoyl-CoA + AMP + diphosphate. It catalyses the reaction (9Z)-octadecenoate + ATP + CoA = (9Z)-octadecenoyl-CoA + AMP + diphosphate. It carries out the reaction (9Z)-hexadecenoate + ATP + CoA = (9Z)-hexadecenoyl-CoA + AMP + diphosphate. The enzyme catalyses (9Z,12Z)-octadecadienoate + ATP + CoA = (9Z,12Z)-octadecadienoyl-CoA + AMP + diphosphate. The catalysed reaction is (9Z,12Z,15Z)-octadecatrienoate + ATP + CoA = (9Z,12Z,15Z)-octadecatrienoyl-CoA + AMP + diphosphate. It catalyses the reaction (4Z,7Z,10Z,13Z,16Z,19Z)-docosahexaenoate + ATP + CoA = (4Z,7Z,10Z,13Z,16Z,19Z)-docosahexaenoyl-CoA + AMP + diphosphate. It carries out the reaction (5Z,8Z,11Z,14Z,17Z)-eicosapentaenoate + ATP + CoA = (5Z,8Z,11Z,14Z,17Z)-eicosapentaenoyl-CoA + AMP + diphosphate. The enzyme catalyses a fatty acid + ATP + CoA = a fatty acyl-CoA + AMP + diphosphate. Functionally, catalyzes the conversion of long-chain fatty acids to their active form acyl-CoA for both synthesis of cellular lipids, and degradation via beta-oxidation. ACSL3 is required for the incorporation of fatty acids into phosphatidylcholine, the major phospholipid located on the surface of VLDL (very low density lipoproteins). Has mainly an anabolic role in energy metabolism. Mediates hepatic lipogenesis. Preferentially uses myristate, laurate, arachidonate and eicosapentaenoate as substrates. Both isoforms exhibit the same level of activity. In Rattus norvegicus (Rat), this protein is Fatty acid CoA ligase Acsl3.